The following is a 240-amino-acid chain: MALEKSLETGDGQEKVRKQTAVYVYEAPLRLWHWVTALSIVVLGVTGYFIGAPLPTMPGEAMDNYLMGYIRFAHFAAGYVLAIGFLGRVYWAFVGNHHARELFLVPVHRKAWWKELWHEVRWYLFLEKTPKKYIGHNPLGQLAMFCFFVVGAVFMSVTGFALYAEGLGRDSWADRLFGWVIPLFGQSQDVHTWHHLGMWYLVVFVMVHVYLAVREDIVSRQSLISTMVGGWRMFKDDRPD.

Helical transmembrane passes span 31–51, 75–95, 142–163, and 196–213; these read LWHWVTALSIVVLGVTGYFIG, FAAGYVLAIGFLGRVYWAFVG, LAMFCFFVVGAVFMSVTGFALY, and LGMWYLVVFVMVHVYLAV.

The protein belongs to the HupC/HyaC/HydC family.

Its subcellular location is the cell membrane. Probable b-type cytochrome. In Azotobacter vinelandii, this protein is Probable Ni/Fe-hydrogenase B-type cytochrome subunit (hoxZ).